The following is a 38-amino-acid chain: Photosystem II reaction center protein L (38 aa).

A helical membrane pass occupies residues 17 to 37; that stretch reads SLFWGLLLIFVLAILFSSYIF.

Belongs to the PsbL family. In terms of assembly, PSII is composed of 1 copy each of membrane proteins PsbA, PsbB, PsbC, PsbD, PsbE, PsbF, PsbH, PsbI, PsbJ, PsbK, PsbL, PsbM, PsbT, PsbX, PsbY, PsbZ, Psb30/Ycf12, at least 3 peripheral proteins of the oxygen-evolving complex and a large number of cofactors. It forms dimeric complexes.

The protein resides in the plastid. It localises to the cyanelle thylakoid membrane. Its function is as follows. One of the components of the core complex of photosystem II (PSII). PSII is a light-driven water:plastoquinone oxidoreductase that uses light energy to abstract electrons from H(2)O, generating O(2) and a proton gradient subsequently used for ATP formation. It consists of a core antenna complex that captures photons, and an electron transfer chain that converts photonic excitation into a charge separation. This subunit is found at the monomer-monomer interface and is required for correct PSII assembly and/or dimerization. The polypeptide is Photosystem II reaction center protein L (Cyanophora paradoxa).